The sequence spans 247 residues: ATP synthase subunit a, chloroplastic (247 aa).

A run of 5 helical transmembrane segments spans residues 38 to 58 (QVLITSWVVIAILLGSAFIAV), 95 to 115 (VPFIGTLFLFIFVSNWSGALL), 134 to 154 (INTTVALALLTSIAYFYAGLS), 199 to 219 (LVVVVLVSLVPLVVPIPVMFL), and 220 to 240 (GLFTSGIQALIFATLAAAYIG).

Belongs to the ATPase A chain family. F-type ATPases have 2 components, CF(1) - the catalytic core - and CF(0) - the membrane proton channel. CF(1) has five subunits: alpha(3), beta(3), gamma(1), delta(1), epsilon(1). CF(0) has four main subunits: a, b, b' and c.

The protein localises to the plastid. It localises to the chloroplast thylakoid membrane. Functionally, key component of the proton channel; it plays a direct role in the translocation of protons across the membrane. The protein is ATP synthase subunit a, chloroplastic of Citrus sinensis (Sweet orange).